The following is a 541-amino-acid chain: Chaperonin GroEL (541 aa).

ATP-binding positions include 29-32, 86-90, G413, and D495; these read TLGP and DGTTT.

It belongs to the chaperonin (HSP60) family. Forms a cylinder of 14 subunits composed of two heptameric rings stacked back-to-back. Interacts with the co-chaperonin GroES.

It is found in the cytoplasm. The enzyme catalyses ATP + H2O + a folded polypeptide = ADP + phosphate + an unfolded polypeptide.. Its function is as follows. Together with its co-chaperonin GroES, plays an essential role in assisting protein folding. The GroEL-GroES system forms a nano-cage that allows encapsulation of the non-native substrate proteins and provides a physical environment optimized to promote and accelerate protein folding. This Thermoanaerobacter pseudethanolicus (strain ATCC 33223 / 39E) (Clostridium thermohydrosulfuricum) protein is Chaperonin GroEL.